Here is a 333-residue protein sequence, read N- to C-terminus: MVSLKTVQASNAGLRALPNITALFVGGTSGIGQSTLRQLARYADSPTAYIIGRNEARTRPFLSELQQLNPKGRFHFIEADVSLVRNVDAACQQILQQQKKLNFLFMTPGGISLGGRNETVEGIDYLFALRYYSRMRFIQNLLPLLEASSPSRVISVYGGGFEYSINTADLDLKHNFSLLNAYKHSITMTSLSMEHLARTHPAVSFIHVYPGLVGTNIYTNSFPAPVSTFYNYLVWPFMKPFSVDLGESGERHLFHLSSAHYPAKQGIVPQGVPLEAGEVAKGITGEPGSGAYLLNWKGDVRPSTKILAQYREQKIPQLVWDHTESLMDQAVHR.

This sequence belongs to the NmrA-type oxidoreductase family.

It participates in secondary metabolite biosynthesis; terpenoid biosynthesis. Functionally, oxidoreductase; part of the gene cluster that mediates the biosynthesis of the diterpene ent-pimara-8(14),15-diene (PD). Within the cluster, the HMG-CoA reductase AN1593 functions in the mevalonate pathway, which produces isoprenoid precursors. The geranylgeranyl pyrophosphate (GGPP) synthase AN1592 is needed in the formation of GGPP, the precursor for diterpenes. Lastly, the pimaradiene synthase pbcA performs the 2 cyclization steps that convert GGPP to ent-pimara-8(14),15-diene. The putative roles of the remaining cluster enzymes in ent-pimara-8(14),15-diene biosynthesis is unclear. The cytochrome P450 monooxygenase AN1598, the glutathione S-transferase AN1595, the oxidoreductases AN1596 and AN1597 probably function as decorative enzymes. It is possible that in biological conditions the compound is oxidized to ent-pimara-8(14),15-dien-19-oic acid, which is a bioactive diterpene compound predominant in many plant extracts. The sequence is that of Oxidoreductase AN1596 from Emericella nidulans (strain FGSC A4 / ATCC 38163 / CBS 112.46 / NRRL 194 / M139) (Aspergillus nidulans).